The chain runs to 337 residues: Protein-glutamate methylesterase/protein-glutamine glutaminase of group 3 operon (337 aa).

The 118-residue stretch at 2-119 (KIAIVNDMPL…GDAREAAAPL (118 aa)) folds into the Response regulatory domain. Asp53 is modified (4-aspartylphosphate). In terms of domain architecture, CheB-type methylesterase spans 144–337 (PLREASQRRG…AGRLTEFFAK (194 aa)). Active-site residues include Ser160, His187, and Asp280.

It belongs to the CheB family. Post-translationally, phosphorylated by CheA. Phosphorylation of the N-terminal regulatory domain activates the methylesterase activity.

The protein resides in the cytoplasm. The enzyme catalyses [protein]-L-glutamate 5-O-methyl ester + H2O = L-glutamyl-[protein] + methanol + H(+). It catalyses the reaction L-glutaminyl-[protein] + H2O = L-glutamyl-[protein] + NH4(+). Involved in chemotaxis. Part of a chemotaxis signal transduction system that modulates chemotaxis in response to various stimuli. Catalyzes the demethylation of specific methylglutamate residues introduced into the chemoreceptors (methyl-accepting chemotaxis proteins or MCP) by CheR. Also mediates the irreversible deamidation of specific glutamine residues to glutamic acid. The chain is Protein-glutamate methylesterase/protein-glutamine glutaminase of group 3 operon from Pseudomonas putida (strain ATCC 47054 / DSM 6125 / CFBP 8728 / NCIMB 11950 / KT2440).